A 269-amino-acid polypeptide reads, in one-letter code: Gap junction gamma-3 protein (269 aa).

At 1–33 (MLLLELPIKCRMCGRFLRQLLAQESQHSTPVGR) the chain is on the extracellular side. Residues 34 to 54 (FLLPMLMGFRLLILVSSGPGV) traverse the membrane as a helical segment. Over 55–86 (FGNDENEFICHLGQPGCKTICYDVFRPLSPLR) the chain is Cytoplasmic. The chain crosses the membrane as a helical span at residues 87–107 (FWAFQVILMAVPSAIYVAFTL). The Extracellular segment spans residues 108 to 145 (YHVIGYWEVPGKENKEQETQISKGDHSKDVSGAKSLKL). Residues 146 to 166 (LWAYVAHLGVRLALEGAALGV) form a helical membrane-spanning segment. Residues 167–205 (QYNLYGFKMSSTFICREDPCIGSTTCFQSHPSEKTIFLN) lie on the Cytoplasmic side of the membrane. Residues 206–226 (IMFGISGACFLFIFLELALLG) traverse the membrane as a helical segment. The Extracellular segment spans residues 227–269 (LGRFWRIYKHKLSFLKKLPTSESSVRSKDTTDELSVVEAKEPF). At Ser-261 the chain carries Phosphoserine.

This sequence belongs to the connexin family. Gamma-type subfamily. A connexon is composed of a hexamer of connexins. CNS specific. Expression is restricted to brain, spinal cord, and sciatic nerve.

Its subcellular location is the cell membrane. It is found in the cell junction. The protein resides in the gap junction. Its function is as follows. One gap junction consists of a cluster of closely packed pairs of transmembrane channels, the connexons, through which materials of low MW diffuse from one cell to a neighboring cell. The sequence is that of Gap junction gamma-3 protein (Gjc3) from Mus musculus (Mouse).